The sequence spans 305 residues: Peroxisome biogenesis factor 2 (305 aa).

Topologically, residues 1 to 15 are peroxisomal matrix; it reads MAAREESTQSANRVL. A helical transmembrane segment spans residues 16–42; that stretch reads RISQLDALELNKALEQLVWSQFTQCFH. Topologically, residues 43–48 are cytoplasmic; the sequence is GFKPGL. The helical transmembrane segment at 49-74 threads the bilayer; it reads LARFEPEVKAFLWLFLWRFTIYSKNA. Residues 75–98 are Peroxisomal matrix-facing; that stretch reads TVGQSVLNIQHKNDSSPNPVYQPP. Residues 99–125 traverse the membrane as a helical segment; sequence SKNQKLLYAVCTIGGRWLEERCYDLFR. Topologically, residues 126-133 are cytoplasmic; it reads NRHLASFG. Residues 134–160 traverse the membrane as a helical segment; the sequence is KAKQCMNFVVGLLKLGELMNFLIFLQK. The Peroxisomal matrix portion of the chain corresponds to 161 to 187; the sequence is GKFATLTERLLGIHSVFCKPQNMREVG. The chain crosses the membrane as a helical span at residues 188 to 211; that stretch reads FEYMNRELLWHGFAEFLIFLLPLI. Over 212 to 305 the chain is Cytoplasmic; sequence NIQKLKAKLS…GIQMSEVNAL (94 aa). Residues cysteine 244, cysteine 247, cysteine 259, histidine 261, cysteine 264, cysteine 267, cysteine 280, and cysteine 283 each contribute to the Zn(2+) site. Residues 244–284 form an RING-type zinc finger; that stretch reads CALCGEWPTMPHTIGCEHVFCYYCVKSSFLFDIYFTCPKCG.

Belongs to the pex2/pex10/pex12 family. In terms of assembly, component of the PEX2-PEX10-PEX12 retrotranslocation channel, composed of PEX2, PEX10 and PEX12. In terms of processing, forms intramolecular and intermolecular disulfide bonds in response to reactive oxygen species (ROS), promoting higher stability.

It localises to the peroxisome membrane. The catalysed reaction is [E2 ubiquitin-conjugating enzyme]-S-ubiquitinyl-L-cysteine + [acceptor protein]-L-cysteine = [E2 ubiquitin-conjugating enzyme]-L-cysteine + [acceptor protein]-S-ubiquitinyl-L-cysteine.. It carries out the reaction S-ubiquitinyl-[E2 ubiquitin-conjugating enzyme]-L-cysteine + [acceptor protein]-L-lysine = [E2 ubiquitin-conjugating enzyme]-L-cysteine + N(6)-ubiquitinyl-[acceptor protein]-L-lysine.. It functions in the pathway protein modification; protein ubiquitination. In terms of biological role, E3 ubiquitin-protein ligase component of a retrotranslocation channel required for peroxisome organization by mediating export of the PEX5 receptor from peroxisomes to the cytosol, thereby promoting PEX5 recycling. The retrotranslocation channel is composed of PEX2, PEX10 and PEX12; each subunit contributing transmembrane segments that coassemble into an open channel that specifically allows the passage of PEX5 through the peroxisomal membrane. PEX2 also regulates peroxisome organization by acting as a E3 ubiquitin-protein ligase. PEX2 ubiquitinates PEX5 during its passage through the retrotranslocation channel: catalyzes monoubiquitination of PEX5 at 'Cys-11', a modification that acts as a signal for PEX5 extraction into the cytosol. Required for pexophagy in response to starvation by mediating ubiquitination of peroxisomal proteins, such as PEX5 and ABCD3/PMP70. Also involved in the response to reactive oxygen species (ROS) by mediating 'Lys-48'-linked polyubiquitination and subsequent degradation of PNPLA2/ATGL, thereby regulating lipolysis. In Mus musculus (Mouse), this protein is Peroxisome biogenesis factor 2.